The sequence spans 199 residues: Fe/S biogenesis protein NfuA (199 aa).

Residues Cys-151 and Cys-154 each coordinate [4Fe-4S] cluster.

The protein belongs to the NfuA family. As to quaternary structure, homodimer. It depends on [4Fe-4S] cluster as a cofactor.

Functionally, involved in iron-sulfur cluster biogenesis. Binds a 4Fe-4S cluster, can transfer this cluster to apoproteins, and thereby intervenes in the maturation of Fe/S proteins. Could also act as a scaffold/chaperone for damaged Fe/S proteins. This chain is Fe/S biogenesis protein NfuA, found in Xylella fastidiosa (strain 9a5c).